Consider the following 534-residue polypeptide: Chaperonin GroEL, chloroplastic (534 aa).

Residues T29–P32, D86–T90, G414, and D496 each bind ATP.

This sequence belongs to the chaperonin (HSP60) family. As to quaternary structure, forms a cylinder of 14 subunits composed of two heptameric rings stacked back-to-back. Interacts with the co-chaperonin GroES.

The protein localises to the plastid. It is found in the chloroplast. The enzyme catalyses ATP + H2O + a folded polypeptide = ADP + phosphate + an unfolded polypeptide.. Its function is as follows. Together with its co-chaperonin GroES, plays an essential role in assisting protein folding. The GroEL-GroES system forms a nano-cage that allows encapsulation of the non-native substrate proteins and provides a physical environment optimized to promote and accelerate protein folding. The polypeptide is Chaperonin GroEL, chloroplastic (Galdieria sulphuraria (Red alga)).